The sequence spans 369 residues: mRNA cap guanine-N(7) methyltransferase 1 (369 aa).

Positions M1–L55 are disordered. Positions G22–G32 are enriched in gly residues. Residues Y33 to S48 are compositionally biased toward basic and acidic residues. Residues S61 to R340 enclose the mRNA cap 0 methyltransferase domain. N70–N71 serves as a coordination point for mRNA. S-adenosyl-L-methionine contacts are provided by residues K74, A92, D114, D149–C150, and Q171–A173.

It belongs to the class I-like SAM-binding methyltransferase superfamily. mRNA cap 0 methyltransferase family.

The protein localises to the nucleus. It catalyses the reaction a 5'-end (5'-triphosphoguanosine)-ribonucleoside in mRNA + S-adenosyl-L-methionine = a 5'-end (N(7)-methyl 5'-triphosphoguanosine)-ribonucleoside in mRNA + S-adenosyl-L-homocysteine. MRNA-capping methyltransferase that methylates the N7 position of the added guanosine to the 5'-cap structure of mRNAs. Binds RNA containing 5'-terminal GpppC. The protein is mRNA cap guanine-N(7) methyltransferase 1 of Oryza sativa subsp. japonica (Rice).